We begin with the raw amino-acid sequence, 319 residues long: ATP-dependent 6-phosphofructokinase (319 aa).

An ATP-binding site is contributed by Gly-11. 21 to 25 is a binding site for ADP; it reads RAVVR. ATP-binding positions include 72–73 and 102–105; these read RC and GDGS. Asp-103 is a Mg(2+) binding site. 125–127 provides a ligand contact to substrate; sequence TID. The Proton acceptor role is filled by Asp-127. Position 154 (Arg-154) interacts with ADP. Substrate-binding positions include Arg-162 and 169–171; that span reads MGR. ADP contacts are provided by residues 185 to 187, Arg-211, and 213 to 215; these read GAE and KKH. Substrate is bound by residues Glu-222, Arg-243, and 249-252; that span reads HIQR.

The protein belongs to the phosphofructokinase type A (PFKA) family. ATP-dependent PFK group I subfamily. Prokaryotic clade 'B1' sub-subfamily. As to quaternary structure, homotetramer. It depends on Mg(2+) as a cofactor.

It is found in the cytoplasm. The catalysed reaction is beta-D-fructose 6-phosphate + ATP = beta-D-fructose 1,6-bisphosphate + ADP + H(+). It functions in the pathway carbohydrate degradation; glycolysis; D-glyceraldehyde 3-phosphate and glycerone phosphate from D-glucose: step 3/4. Allosterically activated by ADP and other diphosphonucleosides, and allosterically inhibited by phosphoenolpyruvate. Catalyzes the phosphorylation of D-fructose 6-phosphate to fructose 1,6-bisphosphate by ATP, the first committing step of glycolysis. This chain is ATP-dependent 6-phosphofructokinase, found in Halalkalibacterium halodurans (strain ATCC BAA-125 / DSM 18197 / FERM 7344 / JCM 9153 / C-125) (Bacillus halodurans).